Reading from the N-terminus, the 554-residue chain is MSGPQYGAQPGGYYNNNNNYPPPPPNSYQMNPMPTDGNYGQQPQYGYGGGPPPQQYGNGYGDGGYAPPQGPPPNGSKPPPTDGYGGPPPSYDEVFKVQKPKYNDWWAGLLFLATVAGFVAVSAISIHGYADNRSQNNGSLNGQRNTFGLTTHTIYLFVWVLICAIVLSYAYMWMARKFTKQFIYATGILNIVMGLVTALYMLSRKYWSGGIVFLIFVVLQALFFWSCRSRIPFSTLMLQTAIDVSKVHGHVYLVSAVGGVIGTLFAAYWAITLVAVYVKFEPDPNNAACRNAGGCSSGKVIGLIVFITFAGYWISEWLKNTIHTTVAGIYGSWYFNSRNYPTKVTRGALKRSLTYSFGSISLGSLFIAIINLIRQLAQAAQQNAAQEGDILGTILWCIFGCLIGILDWLVEFINRYAFCHIALYGKAYFAAAKDTWKMVKDRGIDALINECLIGPVLTFGATFVAYACGLIAYLYMVYTKPAYNDGGGFTPVVVAFAFLIGLQVCNVFTTPLTSGIDTIFVAMAWDPEVLMRDHPDLYHRMVQVYPHVQEAIHA.

2 stretches are compositionally biased toward low complexity: residues 1–19 (MSGP…NNNN) and 27–45 (SYQM…QPQY). The interval 1–90 (MSGPQYGAQP…TDGYGGPPPS (90 aa)) is disordered. Over 1–105 (MSGPQYGAQP…KVQKPKYNDW (105 aa)) the chain is Cytoplasmic. The span at 68–90 (PQGPPPNGSKPPPTDGYGGPPPS) shows a compositional bias: pro residues. The chain crosses the membrane as a helical span at residues 106–126 (WAGLLFLATVAGFVAVSAISI). Residues 127–153 (HGYADNRSQNNGSLNGQRNTFGLTTHT) lie on the Extracellular side of the membrane. N-linked (GlcNAc...) asparagine glycosylation is found at Asn132 and Asn137. Residues 154–174 (IYLFVWVLICAIVLSYAYMWM) traverse the membrane as a helical segment. Topologically, residues 175–181 (ARKFTKQ) are cytoplasmic. The helical transmembrane segment at 182–202 (FIYATGILNIVMGLVTALYML) threads the bilayer. Residues 203–206 (SRKY) are Extracellular-facing. Residues 207-227 (WSGGIVFLIFVVLQALFFWSC) traverse the membrane as a helical segment. Over 228–255 (RSRIPFSTLMLQTAIDVSKVHGHVYLVS) the chain is Cytoplasmic. The helical transmembrane segment at 256–276 (AVGGVIGTLFAAYWAITLVAV) threads the bilayer. At 277-297 (YVKFEPDPNNAACRNAGGCSS) the chain is on the extracellular side. The chain crosses the membrane as a helical span at residues 298–318 (GKVIGLIVFITFAGYWISEWL). The Cytoplasmic portion of the chain corresponds to 319–352 (KNTIHTTVAGIYGSWYFNSRNYPTKVTRGALKRS). A helical transmembrane segment spans residues 353–373 (LTYSFGSISLGSLFIAIINLI). At 374 to 389 (RQLAQAAQQNAAQEGD) the chain is on the extracellular side. A helical membrane pass occupies residues 390–410 (ILGTILWCIFGCLIGILDWLV). Residues 411–451 (EFINRYAFCHIALYGKAYFAAAKDTWKMVKDRGIDALINEC) lie on the Cytoplasmic side of the membrane. A helical membrane pass occupies residues 452-472 (LIGPVLTFGATFVAYACGLIA). At 473–487 (YLYMVYTKPAYNDGG) the chain is on the extracellular side. The chain crosses the membrane as a helical span at residues 488–508 (GFTPVVVAFAFLIGLQVCNVF). The Cytoplasmic segment spans residues 509-554 (TTPLTSGIDTIFVAMAWDPEVLMRDHPDLYHRMVQVYPHVQEAIHA).

Belongs to the CTL (choline transporter-like) family.

It localises to the cell membrane. Functionally, probably involved in transport through the plasma membrane. In Neurospora crassa (strain ATCC 24698 / 74-OR23-1A / CBS 708.71 / DSM 1257 / FGSC 987), this protein is Protein PNS1 (pns-1).